Here is a 346-residue protein sequence, read N- to C-terminus: 3-dehydroquinate synthase (346 aa).

NAD(+) contacts are provided by residues aspartate 62–lysine 67, glycine 96–aspartate 100, threonine 120–threonine 121, lysine 133, lysine 142, and phenylalanine 160–threonine 163. Zn(2+) contacts are provided by glutamate 175, histidine 234, and histidine 251.

Belongs to the sugar phosphate cyclases superfamily. Dehydroquinate synthase family. The cofactor is Co(2+). Zn(2+) serves as cofactor. NAD(+) is required as a cofactor.

The protein localises to the cytoplasm. It catalyses the reaction 7-phospho-2-dehydro-3-deoxy-D-arabino-heptonate = 3-dehydroquinate + phosphate. Its pathway is metabolic intermediate biosynthesis; chorismate biosynthesis; chorismate from D-erythrose 4-phosphate and phosphoenolpyruvate: step 2/7. Catalyzes the conversion of 3-deoxy-D-arabino-heptulosonate 7-phosphate (DAHP) to dehydroquinate (DHQ). The protein is 3-dehydroquinate synthase of Campylobacter curvus (strain 525.92).